We begin with the raw amino-acid sequence, 216 residues long: Redox-sensing transcriptional repressor Rex (216 aa).

Residues 16-55 (VYYRYLNVLLNANKHRVSSTELSEAVQVDSATIRRDFSYF) constitute a DNA-binding region (H-T-H motif). Residue 90-95 (GVGSLG) coordinates NAD(+).

It belongs to the transcriptional regulatory Rex family. As to quaternary structure, homodimer.

Its subcellular location is the cytoplasm. In terms of biological role, modulates transcription in response to changes in cellular NADH/NAD(+) redox state. In Limosilactobacillus fermentum (strain NBRC 3956 / LMG 18251) (Lactobacillus fermentum), this protein is Redox-sensing transcriptional repressor Rex.